Consider the following 462-residue polypeptide: Elongation factor 1-alpha 1 (462 aa).

Gly-2 carries the n,N,N-trimethylglycine modification. Positions 5-242 constitute a tr-type G domain; sequence KTHINIVVIG…DCILPPTRPT (238 aa). Residues 14–21 are G1; that stretch reads GHVDSGKS. GTP is bound at residue 14 to 21; it reads GHVDSGKS. Lys-36 carries the post-translational modification N6,N6,N6-trimethyllysine; alternate. Lys-36 bears the N6,N6-dimethyllysine; alternate mark. At Lys-36 the chain carries N6-methyllysine; alternate. Lys-55 is subject to N6,N6-dimethyllysine. The tract at residues 70–74 is G2; the sequence is GITID. Lys-79 carries the N6,N6,N6-trimethyllysine; by EEF1AKMT1 modification. The tract at residues 91 to 94 is G3; that stretch reads DAPG. Residue 153-156 coordinates GTP; that stretch reads NKMD. Positions 153 to 156 are G4; it reads NKMD. At Lys-165 the chain carries N6,N6,N6-trimethyllysine; alternate; by EEF1AKMT3. Residue Lys-165 is modified to N6,N6-dimethyllysine; alternate; by EEF1AKMT3. At Lys-165 the chain carries N6-acetyllysine; alternate. At Lys-165 the chain carries N6-methyllysine; alternate; by EEF1AKMT3. N6-acetyllysine is present on Lys-172. Position 194–196 (194–196) interacts with GTP; the sequence is SGW. The tract at residues 194–196 is G5; that stretch reads SGW. At Lys-273 the chain carries N6-acetyllysine. Ser-300 carries the post-translational modification Phosphoserine; by TGFBR1. Glu-301 bears the 5-glutamyl glycerylphosphorylethanolamine mark. At Lys-318 the chain carries N6,N6,N6-trimethyllysine; by EEF1AKMT2. Residue Glu-374 is modified to 5-glutamyl glycerylphosphorylethanolamine. Residue Lys-385 forms a Glycyl lysine isopeptide (Lys-Gly) (interchain with G-Cter in ubiquitin) linkage. An N6-acetyllysine; alternate modification is found at Lys-392. Lys-392 carries the N6-succinyllysine; alternate modification. Thr-432 bears the Phosphothreonine; by PASK mark. Lys-439 carries the post-translational modification N6-acetyllysine.

It belongs to the TRAFAC class translation factor GTPase superfamily. Classic translation factor GTPase family. EF-Tu/EF-1A subfamily. As to quaternary structure, found in a nuclear export complex with XPO5, EEF1A1, Ran and aminoacylated tRNA. Interacts with PARP1 and TXK. Interacts with KARS1. May interact with ERGIC2. Interacts with IFIT1 (via TPR repeats 4-7). Interacts with DLC1, facilitating distribution to the membrane periphery and ruffles upon growth factor stimulation. Interacts with ZPR1; the interaction occurs in a epidermal growth factor (EGF)-dependent manner. Interacts with PPP1R16B. Interacts with SPHK1 and SPHK2; both interactions increase SPHK1 and SPHK2 kinase activity. Interacts with guanyl-nucleotide exchange factor EEF1B2. Interacts (via middle-region) with HTATIP2 (via N-terminus); the interaction is direct and competes with EEF1A1 binding to guanyl-nucleotide exchange factor EEF1B2, thereby inhibiting GDP for GTP exchange and reactivation of EEF1A1. Interacts with tRNA. In terms of processing, ISGylated. Post-translationally, phosphorylated by TXK. Phosphorylation by PASK increases translation efficiency. Phosphorylated by ROCK2. Phosphorylation by TGFBR1 inhibits translation elongation. Trimethylated at Lys-79 by EEF1AKMT1. Methylated at Lys-165 by EEF1AKMT3, methylation by EEF1AKMT3 is dynamic as well as inducible by stress conditions, such as ER-stress, and plays a regulatory role on mRNA translation. Trimethylated at Lys-318 by EEF1AKMT2. Mono-, di-, and trimethylated at Lys-36 by EEF1AKMT4; trimethylated form is predominant. Methylation by EEF1AKMT4 contributes to the fine-tuning of translation rates for a subset of tRNAs. Trimethylated at Gly-2 by METTL13. Mono- and dimethylated at Lys-55 by METTL13; dimethylated form is predominant. In terms of processing, ubiquitinated at Lys-385 by RNF14 in response to ribosome collisions (ribosome stalling), leading to its degradation by the proteasome and rescue of stalled ribosomes.

Its subcellular location is the cytoplasm. The protein localises to the nucleus. It localises to the nucleolus. The protein resides in the cell membrane. It carries out the reaction GTP + H2O = GDP + phosphate + H(+). Its function is as follows. Translation elongation factor that catalyzes the GTP-dependent binding of aminoacyl-tRNA (aa-tRNA) to the A-site of ribosomes during the elongation phase of protein synthesis. Base pairing between the mRNA codon and the aa-tRNA anticodon promotes GTP hydrolysis, releasing the aa-tRNA from EEF1A1 and allowing its accommodation into the ribosome. The growing protein chain is subsequently transferred from the P-site peptidyl tRNA to the A-site aa-tRNA, extending it by one amino acid through ribosome-catalyzed peptide bond formation. Also plays a role in the positive regulation of IFNG transcription in T-helper 1 cells as part of an IFNG promoter-binding complex with TXK and PARP1. Also plays a role in cytoskeleton organization by promoting actin bundling. This chain is Elongation factor 1-alpha 1 (EEF1A1), found in Equus caballus (Horse).